A 218-amino-acid chain; its full sequence is Octanoyltransferase (218 aa).

Positions 45 to 218 constitute a BPL/LPL catalytic domain; sequence AGTADELWLL…TDALQRAIYS (174 aa). Substrate-binding positions include 84 to 91, 151 to 153, and 164 to 166; these read RGGQITYH, ALG, and GLA. Cysteine 182 serves as the catalytic Acyl-thioester intermediate.

The protein belongs to the LipB family.

Its subcellular location is the cytoplasm. It carries out the reaction octanoyl-[ACP] + L-lysyl-[protein] = N(6)-octanoyl-L-lysyl-[protein] + holo-[ACP] + H(+). Its pathway is protein modification; protein lipoylation via endogenous pathway; protein N(6)-(lipoyl)lysine from octanoyl-[acyl-carrier-protein]: step 1/2. In terms of biological role, catalyzes the transfer of endogenously produced octanoic acid from octanoyl-acyl-carrier-protein onto the lipoyl domains of lipoate-dependent enzymes. Lipoyl-ACP can also act as a substrate although octanoyl-ACP is likely to be the physiological substrate. The chain is Octanoyltransferase from Thiobacillus denitrificans (strain ATCC 25259 / T1).